Reading from the N-terminus, the 163-residue chain is Crossover junction endodeoxyribonuclease RuvC (163 aa).

Residues aspartate 4, glutamate 65, and aspartate 138 contribute to the active site. Positions 4, 65, and 138 each coordinate Mg(2+).

Belongs to the RuvC family. As to quaternary structure, homodimer which binds Holliday junction (HJ) DNA. The HJ becomes 2-fold symmetrical on binding to RuvC with unstacked arms; it has a different conformation from HJ DNA in complex with RuvA. In the full resolvosome a probable DNA-RuvA(4)-RuvB(12)-RuvC(2) complex forms which resolves the HJ. It depends on Mg(2+) as a cofactor.

Its subcellular location is the cytoplasm. It catalyses the reaction Endonucleolytic cleavage at a junction such as a reciprocal single-stranded crossover between two homologous DNA duplexes (Holliday junction).. Functionally, the RuvA-RuvB-RuvC complex processes Holliday junction (HJ) DNA during genetic recombination and DNA repair. Endonuclease that resolves HJ intermediates. Cleaves cruciform DNA by making single-stranded nicks across the HJ at symmetrical positions within the homologous arms, yielding a 5'-phosphate and a 3'-hydroxyl group; requires a central core of homology in the junction. The consensus cleavage sequence is 5'-(A/T)TT(C/G)-3'. Cleavage occurs on the 3'-side of the TT dinucleotide at the point of strand exchange. HJ branch migration catalyzed by RuvA-RuvB allows RuvC to scan DNA until it finds its consensus sequence, where it cleaves and resolves the cruciform DNA. The sequence is that of Crossover junction endodeoxyribonuclease RuvC from Corynebacterium diphtheriae (strain ATCC 700971 / NCTC 13129 / Biotype gravis).